Reading from the N-terminus, the 101-residue chain is Small ribosomal subunit protein uS14 (101 aa).

The protein belongs to the universal ribosomal protein uS14 family. In terms of assembly, part of the 30S ribosomal subunit. Contacts proteins S3 and S10.

Functionally, binds 16S rRNA, required for the assembly of 30S particles and may also be responsible for determining the conformation of the 16S rRNA at the A site. The protein is Small ribosomal subunit protein uS14 of Bordetella parapertussis (strain 12822 / ATCC BAA-587 / NCTC 13253).